Reading from the N-terminus, the 159-residue chain is Phosphopantetheine adenylyltransferase (159 aa).

Ser9 lines the substrate pocket. ATP contacts are provided by residues Ser9–Phe10 and His17. Substrate is bound by residues Lys41, Leu73, and Lys87. ATP is bound by residues Gly88–Arg90, Glu98, and Tyr123–Ser129.

The protein belongs to the bacterial CoaD family. As to quaternary structure, homohexamer. The cofactor is Mg(2+).

Its subcellular location is the cytoplasm. The catalysed reaction is (R)-4'-phosphopantetheine + ATP + H(+) = 3'-dephospho-CoA + diphosphate. The protein operates within cofactor biosynthesis; coenzyme A biosynthesis; CoA from (R)-pantothenate: step 4/5. Its function is as follows. Reversibly transfers an adenylyl group from ATP to 4'-phosphopantetheine, yielding dephospho-CoA (dPCoA) and pyrophosphate. The sequence is that of Phosphopantetheine adenylyltransferase from Thermoanaerobacter pseudethanolicus (strain ATCC 33223 / 39E) (Clostridium thermohydrosulfuricum).